A 303-amino-acid polypeptide reads, in one-letter code: Mesenteric estrogen-dependent adipogenesis protein (303 aa).

It is found in the cytoplasm. Its function is as follows. Involved in processes that promote adipocyte differentiation, lipid accumulation, and glucose uptake in mature adipocytes. In Bos taurus (Bovine), this protein is Mesenteric estrogen-dependent adipogenesis protein (MEDAG).